Consider the following 712-residue polypeptide: Polyribonucleotide nucleotidyltransferase (712 aa).

2 residues coordinate Mg(2+): Asp487 and Asp493. In terms of domain architecture, KH spans 554–613 (PRIEVMNIPVDKIREVIGSGGKVIREIVEKTGAKINIEDDGTVKIASSSGKEIEAARKWI). Positions 623–691 (GQIYEGTVVK…ERGKVRLSMK (69 aa)) constitute an S1 motif domain.

Belongs to the polyribonucleotide nucleotidyltransferase family. Mg(2+) serves as cofactor.

The protein localises to the cytoplasm. The enzyme catalyses RNA(n+1) + phosphate = RNA(n) + a ribonucleoside 5'-diphosphate. Functionally, involved in mRNA degradation. Catalyzes the phosphorolysis of single-stranded polyribonucleotides processively in the 3'- to 5'-direction. In Rhizobium leguminosarum bv. trifolii (strain WSM2304), this protein is Polyribonucleotide nucleotidyltransferase.